We begin with the raw amino-acid sequence, 513 residues long: ATP synthase subunit alpha (513 aa).

169–176 is an ATP binding site; sequence GDRKTGKS.

The protein belongs to the ATPase alpha/beta chains family. F-type ATPases have 2 components, CF(1) - the catalytic core - and CF(0) - the membrane proton channel. CF(1) has five subunits: alpha(3), beta(3), gamma(1), delta(1), epsilon(1). CF(0) has three main subunits: a(1), b(2) and c(9-12). The alpha and beta chains form an alternating ring which encloses part of the gamma chain. CF(1) is attached to CF(0) by a central stalk formed by the gamma and epsilon chains, while a peripheral stalk is formed by the delta and b chains.

Its subcellular location is the cell membrane. It catalyses the reaction ATP + H2O + 4 H(+)(in) = ADP + phosphate + 5 H(+)(out). Its function is as follows. Produces ATP from ADP in the presence of a proton gradient across the membrane. The alpha chain is a regulatory subunit. In Levilactobacillus brevis (strain ATCC 367 / BCRC 12310 / CIP 105137 / JCM 1170 / LMG 11437 / NCIMB 947 / NCTC 947) (Lactobacillus brevis), this protein is ATP synthase subunit alpha.